A 300-amino-acid chain; its full sequence is Endonuclease III-like protein 1 (300 aa).

The transit peptide at 1-19 (MNSGVRMVTRSRSRATRIA) directs the protein to the mitochondrion. The segment at 1–53 (MNSGVRMVTRSRSRATRIASEGCREELAPREAAAEGRKSHRPVRHPRRTQKTH) is disordered. Residues 22-37 (GCREELAPREAAAEGR) show a composition bias toward basic and acidic residues. Over residues 38 to 51 (KSHRPVRHPRRTQK) the composition is skewed to basic residues. The 25-residue stretch at 187 to 211 (RYEGDIPASVAELVALPGVGPKMAH) folds into the HhH domain. K208 functions as the Nucleophile; for N-glycosylase activity in the catalytic mechanism. Positions 278, 285, 288, and 294 each coordinate [4Fe-4S] cluster.

This sequence belongs to the Nth/MutY family. In terms of assembly, interacts with YBX1. Interacts with ERCC5/XPG; the interaction stimulates NTHL1 activity and NTHL1 binding to its DNA substrate. [4Fe-4S] cluster serves as cofactor. In terms of processing, ubiquitinated by TRIM26; leading to proteasomal degradation. Widely expressed.

The protein localises to the nucleus. It is found in the mitochondrion. It carries out the reaction 2'-deoxyribonucleotide-(2'-deoxyribose 5'-phosphate)-2'-deoxyribonucleotide-DNA = a 3'-end 2'-deoxyribonucleotide-(2,3-dehydro-2,3-deoxyribose 5'-phosphate)-DNA + a 5'-end 5'-phospho-2'-deoxyribonucleoside-DNA + H(+). Functionally, bifunctional DNA N-glycosylase with associated apurinic/apyrimidinic (AP) lyase function that catalyzes the first step in base excision repair (BER), the primary repair pathway for the repair of oxidative DNA damage. The DNA N-glycosylase activity releases the damaged DNA base from DNA by cleaving the N-glycosidic bond, leaving an AP site. The AP lyase activity cleaves the phosphodiester bond 3' to the AP site by a beta-elimination. Primarily recognizes and repairs oxidative base damage of pyrimidines. This chain is Endonuclease III-like protein 1 (Nthl1), found in Mus musculus (Mouse).